The chain runs to 798 residues: Serine/threonine-protein kinase haspin (798 aa).

The segment at 1–110 (MAASLPGPGS…WKLRARPSLT (110 aa)) is disordered. The residue at position 58 (serine 58) is a Phosphoserine. Residues 59-70 (QSDDPDDPDDPD) show a composition bias toward acidic residues. At serine 93 the chain carries Phosphoserine; by AURKB. Threonine 97 carries the post-translational modification Phosphothreonine. Residue serine 143 is modified to Phosphoserine; by AURKB. A Phosphoserine modification is found at serine 147. Residues 275 to 350 (LVVGNGPEGP…KHQEATETSL (76 aa)) are disordered. Positions 300–315 (CQERGLQEAVRREHQE) are enriched in basic and acidic residues. Residues 484–798 (LQRCEKIGEG…DLLCQHSLFK (315 aa)) form the Protein kinase domain. ATP is bound by residues 490-498 (IGEGVFGEV), lysine 511, 606-611 (EFGGID), 649-654 (DLHWGN), and 687-689 (DYT). Aspartate 649 functions as the Proton acceptor in the catalytic mechanism.

It belongs to the protein kinase superfamily. Ser/Thr protein kinase family. Haspin subfamily. The cofactor is Mg(2+). In terms of processing, autophosphorylated on both serine and threonine residues. Strongly phosphorylated during mitosis but this does not appear to significantly affect its intrinsic kinase activity. Phosphorylation by AURKB is required for full activity toward histone H3 at 'Ser-3' in mitosis. As to expression, strongly expressed in testis. Also present in thymus and bone marrow and low levels observed in prostate, intestine, lung, spleen and lymph node. Expressed in fetal skin, liver, kidney and small intestine and also in proliferating but not non-proliferating cell lines.

The protein localises to the nucleus. It localises to the chromosome. Its subcellular location is the cytoplasm. The protein resides in the cytoskeleton. It is found in the spindle. The enzyme catalyses L-seryl-[protein] + ATP = O-phospho-L-seryl-[protein] + ADP + H(+). It carries out the reaction L-threonyl-[protein] + ATP = O-phospho-L-threonyl-[protein] + ADP + H(+). Constitutive activity that does not require phosphorylation. Specifically inhibited by 3-(1H-indazol-5-yl)-N-propylimidazo[1,2-b]pyridazin-6-amine (CHR-6494). Serine/threonine-protein kinase that phosphorylates histone H3 at 'Thr-3' (H3T3ph) during mitosis. May act through H3T3ph to both position and modulate activation of AURKB and other components of the chromosomal passenger complex (CPC) at centromeres to ensure proper chromatid cohesion, metaphase alignment and normal progression through the cell cycle. The chain is Serine/threonine-protein kinase haspin from Homo sapiens (Human).